A 604-amino-acid polypeptide reads, in one-letter code: Elongation factor 4 (604 aa).

One can recognise a tr-type G domain in the interval 4-186 (EFIRNFSIIA…AIVHLVPPPK (183 aa)). GTP-binding positions include 16–21 (DHGKST) and 133–136 (NKID).

This sequence belongs to the TRAFAC class translation factor GTPase superfamily. Classic translation factor GTPase family. LepA subfamily.

Its subcellular location is the cell inner membrane. It catalyses the reaction GTP + H2O = GDP + phosphate + H(+). In terms of biological role, required for accurate and efficient protein synthesis under certain stress conditions. May act as a fidelity factor of the translation reaction, by catalyzing a one-codon backward translocation of tRNAs on improperly translocated ribosomes. Back-translocation proceeds from a post-translocation (POST) complex to a pre-translocation (PRE) complex, thus giving elongation factor G a second chance to translocate the tRNAs correctly. Binds to ribosomes in a GTP-dependent manner. This Solibacter usitatus (strain Ellin6076) protein is Elongation factor 4.